The primary structure comprises 331 residues: 2-keto-3-deoxygluconate permease (331 aa).

A run of 10 helical transmembrane segments spans residues I10–P30, G42–I62, L77–P97, G100–M120, A141–A161, L163–A183, P200–M220, L224–A244, T254–A274, and A289–Y309.

This sequence belongs to the KdgT transporter family.

It is found in the cell inner membrane. The enzyme catalyses 2-dehydro-3-deoxy-D-gluconate(in) + H(+)(in) = 2-dehydro-3-deoxy-D-gluconate(out) + H(+)(out). Catalyzes the proton-dependent uptake of 2-keto-3-deoxygluconate (KDG) into the cell. The protein is 2-keto-3-deoxygluconate permease of Enterobacter sp. (strain 638).